A 344-amino-acid chain; its full sequence is MLNALYPLFRPALFSMDAEDAHHFTLNNLLRAHRMGLGSCIGNRIAEDPHTVMGVRFPNPVGLAAGLDKDGAYIDGLAALGFGFIEVGTVTPRAQPGNPRPRMFRLPQADALINRMGFNNGGVDAFVANVRASRWKAEGGVLGLNIGKNADTPIERANDDYLYCLERVYPHASYVTVNISSPNTKNLRQLQGASELDSLLSSLKDAQQRLADQHKRYVPLALKIAPDLDADQIGNIGDALVRHKIDGVIATNTTISREAVKGLPHAEEAGGLSGRPVFEASTRVVRALRGVVGDAVPVIGVGGIFGGADARAKIEAGASLVQLYSGLIYRGPALVRECAAALRG.

Residues 65–69 and T89 contribute to the FMN site; that span reads AGLDK. Residue K69 coordinates substrate. Residue 114–118 coordinates substrate; that stretch reads NRMGF. Positions 145 and 178 each coordinate FMN. Position 178 (N178) interacts with substrate. S181 serves as the catalytic Nucleophile. N183 is a binding site for substrate. Residues K223 and T251 each coordinate FMN. 252–253 contributes to the substrate binding site; it reads NT. FMN contacts are provided by residues G274, G303, and 324-325; that span reads YS.

This sequence belongs to the dihydroorotate dehydrogenase family. Type 2 subfamily. In terms of assembly, monomer. FMN serves as cofactor.

The protein resides in the cell membrane. It carries out the reaction (S)-dihydroorotate + a quinone = orotate + a quinol. The protein operates within pyrimidine metabolism; UMP biosynthesis via de novo pathway; orotate from (S)-dihydroorotate (quinone route): step 1/1. Its function is as follows. Catalyzes the conversion of dihydroorotate to orotate with quinone as electron acceptor. The chain is Dihydroorotate dehydrogenase (quinone) from Cupriavidus taiwanensis (strain DSM 17343 / BCRC 17206 / CCUG 44338 / CIP 107171 / LMG 19424 / R1) (Ralstonia taiwanensis (strain LMG 19424)).